We begin with the raw amino-acid sequence, 384 residues long: Somatostatin receptor type 4 (384 aa).

The disordered stretch occupies residues 1–34 (MNTPATLPLGGEDTTWTPGINASWAPDEEEDAVR). Residues 1-41 (MNTPATLPLGGEDTTWTPGINASWAPDEEEDAVRSDGTGTA) are Extracellular-facing. Asn-21 is a glycosylation site (N-linked (GlcNAc...) asparagine). The helical transmembrane segment at 42 to 69 (GMVTIQCIYALVCLVGLVGNALVIFVIL) threads the bilayer. The Cytoplasmic segment spans residues 70–79 (RYAKMKTATN). A helical transmembrane segment spans residues 80–105 (IYLLNLAVADELFMLSVPFVASAAAL). Residues 106-116 (RHWPFGAVLCR) are Extracellular-facing. Residues Cys-115 and Cys-194 are joined by a disulfide bond. Residues 117 to 138 (AVLSVDGLNMFTSVFCLTVLSV) form a helical membrane-spanning segment. Over 139 to 160 (DRYVAVVHPLRAATYRRPSVAK) the chain is Cytoplasmic. The helical transmembrane segment at 161–181 (LINLGVWLASLLVTLPIAVFA) threads the bilayer. Residues 182-203 (DTRPARGGEAVACNLHWPHPAW) are Extracellular-facing. The chain crosses the membrane as a helical span at residues 204 to 228 (SAVFVIYTFLLGFLLPVLAIGLCYL). Topologically, residues 229 to 254 (LIVGKMRAVALRAGWQQRRRSEKKIT) are cytoplasmic. Residues 255-280 (RLVLMVVTVFVLCWMPFYVVQLLNLF) form a helical membrane-spanning segment. The Extracellular portion of the chain corresponds to 281-287 (VTSLDAT). A helical transmembrane segment spans residues 288 to 311 (VNHVSLILSYANSCANPILYGFLS). At 312-384 (DNFRRSFQRV…RVPFTKTTTF (73 aa)) the chain is on the cytoplasmic side. Cys-323 carries S-palmitoyl cysteine lipidation.

This sequence belongs to the G-protein coupled receptor 1 family. As to expression, brain, lung, heart and islets. Moderate levels in the hippocampus, cortex and olfactory bulb.

The protein localises to the cell membrane. Receptor for somatostatin-14. The activity of this receptor is mediated by G proteins which inhibits adenylyl cyclase. It is functionally coupled not only to inhibition of adenylate cyclase, but also to activation of both arachidonate release and mitogen-activated protein (MAP) kinase cascade. The polypeptide is Somatostatin receptor type 4 (Sstr4) (Rattus norvegicus (Rat)).